A 326-amino-acid chain; its full sequence is Vitamin B12 import system permease protein BtuC (326 aa).

9 helical membrane passes run 15–35 (WLLC…CAGE), 61–81 (LAVL…QALF), 88–108 (PGLL…VLLG), 112–132 (LPNW…TLIL), 146–166 (LLAG…AIYF), 184–204 (GGVD…LLWI), 240–260 (GWMV…GLVI), 274–294 (VLLP…DIVA), and 302–322 (ELPI…WLLL).

The protein belongs to the binding-protein-dependent transport system permease family. FecCD subfamily. The complex is composed of two ATP-binding proteins (BtuD), two transmembrane proteins (BtuC) and a solute-binding protein (BtuF).

The protein resides in the cell inner membrane. Functionally, part of the ABC transporter complex BtuCDF involved in vitamin B12 import. Involved in the translocation of the substrate across the membrane. This Shigella sonnei (strain Ss046) protein is Vitamin B12 import system permease protein BtuC.